The following is a 195-amino-acid chain: MASLIDDDDGEFLIGRLLVAMPGIEDPRFERTVLYLCAHDEDAAMGLAVNRPVEGLTVFELLNRLGVRSEIQAPSDLVLLGGPLERERGFVLHTDDFSSPDSTLPVADGVALTATRDALDAMASAIKRPRKSLLALGYAGWGPGQLEQELRDNVWLICDADEGLLFDEDHEHKWTRALAKLGITADHLSATAGRA.

The protein belongs to the UPF0301 (AlgH) family.

The sequence is that of UPF0301 protein CCNA_03506 from Caulobacter vibrioides (strain NA1000 / CB15N) (Caulobacter crescentus).